The sequence spans 106 residues: MYISRNMEQWNEFLDLMRKAFEQGKEQELLTLLLTADERDAVALRVQIVSQLLDKSLAQREIQQILNTSAATITRGSNMIKIMPPEFMDWVKQQLNHNNKNELGGD.

A DNA-binding region spans residues 59–82 (QREIQQILNTSAATITRGSNMIKI).

Belongs to the TrpR family. In terms of assembly, homodimer.

Its subcellular location is the cytoplasm. This protein is an aporepressor. When complexed with L-tryptophan it binds the operator region of the trp operon and prevents the initiation of transcription. The protein is Trp operon repressor homolog of Histophilus somni (strain 2336) (Haemophilus somnus).